Reading from the N-terminus, the 143-residue chain is Anti-sigma F factor (143 aa).

The protein belongs to the anti-sigma-factor family.

The enzyme catalyses L-seryl-[protein] + ATP = O-phospho-L-seryl-[protein] + ADP + H(+). The catalysed reaction is L-threonyl-[protein] + ATP = O-phospho-L-threonyl-[protein] + ADP + H(+). Functionally, binds to sigma F and blocks its ability to form an RNA polymerase holoenzyme (E-sigma F). Phosphorylates SpoIIAA on a serine residue. This phosphorylation may enable SpoIIAA to act as an anti-anti-sigma factor that counteracts SpoIIAB and thus releases sigma F from inhibition. The sequence is that of Anti-sigma F factor from Clostridium botulinum (strain Eklund 17B / Type B).